Consider the following 300-residue polypeptide: Ribosomal protein L11 methyltransferase (300 aa).

Residues Thr144, Gly165, Asp187, and Asn235 each contribute to the S-adenosyl-L-methionine site.

This sequence belongs to the methyltransferase superfamily. PrmA family.

The protein localises to the cytoplasm. It catalyses the reaction L-lysyl-[protein] + 3 S-adenosyl-L-methionine = N(6),N(6),N(6)-trimethyl-L-lysyl-[protein] + 3 S-adenosyl-L-homocysteine + 3 H(+). Functionally, methylates ribosomal protein L11. The chain is Ribosomal protein L11 methyltransferase from Prochlorococcus marinus (strain MIT 9515).